A 136-amino-acid chain; its full sequence is Non-structural protein 1 (136 aa).

This sequence belongs to the pneumovirus non-structural protein 1 family. As to quaternary structure, monomer. Homomultimer. Heteromultimer with NS2. Interacts with the matrix protein M. Interacts with host ELOC and CUL2; this interaction allows NS1 to form an active E3 ligase with ELOC and CUL2. Interacts with host IRF3; this interaction leads to the disrupted association of IRF3 with CREBBP and thus reduced binding of IRF3 to the IFN-beta promoter. Interacts with host MAVS; this interaction prevents MAVS binding to RIGI and inhibits signaling pathway leading to interferon production. Interacts with host TRIM25 (via SPRY domain); this interaction suppresses RIGI ubiquitination and results in decreased interaction between RIGI and MAVS.

It localises to the host cytoplasm. The protein resides in the host mitochondrion. It is found in the host nucleus. Its function is as follows. Plays a major role in antagonizing the type I IFN-mediated antiviral response by degrading or inhibiting multiple cellular factors required for either IFN induction or response pathways. Acts cooperatively with NS2 to repress activation and nuclear translocation of host IFN-regulatory factor IRF3. Also disrupts the association of IRF3 with CREBBP. Interacts with host mitochondrial-associated membrane (MAM) MAVS and prevents the interaction with RIGI. Interacts with TRIM25 to suppress TRIM25-mediated RIGI ubiquitination and thereby RIGI-MAVS interaction. Together with NS2, participates in the proteasomal degradation of host STAT2, IRF3, IRF7, TBK1 and RIGI through a NS-degradasome involving CUL2 and Elongin-C. The degradasome requires an intact mitochondrial MAVS. Decreases the levels of host TRAF3 and IKBKE/IKK-epsilon. As functions other than disruptions of the type I IFN-mediated antiviral signaling pathways, induces host SOCS1 and SOCS3 expression. Suppresses premature apoptosis by an NF-kappa-B-dependent, interferon-independent mechanism and thus facilitates virus growth. Additionally, NS1 may serve some inhibitory role in viral transcription and RNA replication. Suppresses proliferation and activation of host CD103+ CD8+ cytotoxic T-lymphocytes and Th17 helper T-lymphocytes. This Bos taurus (Bovine) protein is Non-structural protein 1 (1C).